The following is a 479-amino-acid chain: Poly(A) polymerase catalytic subunit (479 aa).

Residues Asp202 and Asp204 contribute to the active site. Residues Asp202, Asp204, and Asp253 each contribute to the Ca(2+) site.

Belongs to the poxviridae poly(A) polymerase catalytic subunit family. As to quaternary structure, heterodimer of a large (catalytic) subunit and a small (regulatory) subunit.

It catalyses the reaction RNA(n) + ATP = RNA(n)-3'-adenine ribonucleotide + diphosphate. Its function is as follows. Polymerase that creates the 3'-poly(A) tail of mRNA's. This is Poly(A) polymerase catalytic subunit (OPG063) from Homo sapiens (Human).